We begin with the raw amino-acid sequence, 183 residues long: Beta-defensin 129 (183 aa).

Residues 1 to 19 (MKLLFPIFASLMLQYQVNT) form the signal peptide. 3 disulfides stabilise this stretch: cysteine 27–cysteine 53, cysteine 34–cysteine 48, and cysteine 38–cysteine 54. The interval 141-183 (TATSTKSNTKESRDSATASPPPAPPPPNILPTPSLELEEAEEQ) is disordered. Residues 159-170 (SPPPAPPPPNIL) show a composition bias toward pro residues.

Belongs to the beta-defensin family.

Its subcellular location is the secreted. In terms of biological role, has antibacterial activity. This Pan troglodytes (Chimpanzee) protein is Beta-defensin 129 (DEFB129).